Here is a 256-residue protein sequence, read N- to C-terminus: Floral homeotic protein APETALA 1-1 (256 aa).

The MADS-box domain maps to 1 to 61 (MGRGRVQLKR…GKLFEYSTDS (61 aa)). One can recognise a K-box domain in the interval 88-178 (NTNWSMEYNR…SKQIKEREKV (91 aa)).

As to quaternary structure, homodimer capable of binding to CArG-box sequences. In terms of tissue distribution, expressed in some of the meristems of arrest-stage broccoli heads.

The protein localises to the nucleus. In terms of biological role, transcription factor that promotes early floral meristem identity in synergy with LEAFY. Displays a redundant function with CAULIFLOWER in the up-regulation of LEAFY. Required subsequently for the transition of an inflorescence meristem into a floral meristem, and for the normal development of sepals and petals in flowers. Regulates positively B class homeotic proteins. In Brassica oleracea var. italica (Broccoli), this protein is Floral homeotic protein APETALA 1-1 (1AP1).